A 653-amino-acid polypeptide reads, in one-letter code: Brain-enriched guanylate kinase-associated protein (653 aa).

A Phosphotyrosine modification is found at Tyr-186. A disordered region spans residues 241 to 271; that stretch reads PGSLSSHLSEASAQDLGFPEGLEKPGSRPPY. Polar residues predominate over residues 243-252; sequence SLSSHLSEAS. Phosphoserine is present on residues Ser-249, Ser-278, Ser-295, and Ser-314. The segment at 288 to 329 is disordered; the sequence is RHQDRRPSVEGPGSDVGFLQAQNSTDSTAEEEEEEEEDTEAG. The span at 315–327 shows a compositional bias: acidic residues; it reads TAEEEEEEEEDTE. Ser-400 and Ser-427 each carry phosphoserine. Arg-435 carries the post-translational modification Asymmetric dimethylarginine. Residues Ser-523, Ser-533, Ser-535, Ser-558, Ser-560, Ser-564, Ser-613, and Ser-623 each carry the phosphoserine modification. The interval 587–653 is disordered; the sequence is GASGSPEPEL…KAQLYGTLLN (67 aa).

As to quaternary structure, interacts with DLG4 and DLGAP1 and forms a ternary complex.

The protein resides in the cytoplasm. It localises to the membrane. In terms of biological role, may sustain the structure of the postsynaptic density (PSD). The polypeptide is Brain-enriched guanylate kinase-associated protein (BEGAIN) (Ovis aries (Sheep)).